We begin with the raw amino-acid sequence, 365 residues long: Transcription factor MYB93 (365 aa).

2 consecutive HTH myb-type domains span residues 9–61 (ENGL…TNYL) and 62–116 (RPDI…KKKL). DNA-binding regions (H-T-H motif) lie at residues 37-61 (WRAL…TNYL) and 89-112 (WSAI…NTHL).

As to quaternary structure, interacts with FBX5.

It localises to the nucleus. The protein resides in the cytoplasm. In terms of biological role, transcription factor that acts as a negative regulator of lateral root (LR) development. Required for normal auxin responses during LR development. May be part of a negative feedback loop stimulated specifically in the endodermis upon LR initiation to ensure that LRs are formed only in the correct place. The chain is Transcription factor MYB93 from Arabidopsis thaliana (Mouse-ear cress).